The chain runs to 337 residues: DNA-directed RNA polymerase subunit alpha (337 aa).

The segment at 1-233 (MIQKNWQELI…DQLSIFVNFE (233 aa)) is alpha N-terminal domain (alpha-NTD). Residues 249-337 (FNPVLLKKVD…DLAKRYEDQY (89 aa)) are alpha C-terminal domain (alpha-CTD).

This sequence belongs to the RNA polymerase alpha chain family. In terms of assembly, homodimer. The RNAP catalytic core consists of 2 alpha, 1 beta, 1 beta' and 1 omega subunit. When a sigma factor is associated with the core the holoenzyme is formed, which can initiate transcription.

The enzyme catalyses RNA(n) + a ribonucleoside 5'-triphosphate = RNA(n+1) + diphosphate. Its function is as follows. DNA-dependent RNA polymerase catalyzes the transcription of DNA into RNA using the four ribonucleoside triphosphates as substrates. In Brucella canis (strain ATCC 23365 / NCTC 10854 / RM-666), this protein is DNA-directed RNA polymerase subunit alpha.